The chain runs to 553 residues: Dihydrolipoyllysine-residue acetyltransferase component of pyruvate dehydrogenase complex (553 aa).

The 75-residue stretch at 4–78 folds into the Lipoyl-binding 1 domain; it reads AIEIKVPDIG…SEGSVLVMLE (75 aa). N6-lipoyllysine is present on Lys44. The tract at residues 97–118 is disordered; that stretch reads AAAAPAPAPAPAAAPAAAPAAG. One can recognise a Lipoyl-binding 2 domain in the interval 122–196; it reads TIEVKVPDIG…AEGTLLLILE (75 aa). The residue at position 162 (Lys162) is an N6-lipoyllysine. The 38-residue stretch at 250 to 287 folds into the Peripheral subunit-binding (PSBD) domain; sequence HASPSVRKFARELGVDVSRVPGTGPKGRITQEDVQGYV. The active site involves His526.

This sequence belongs to the 2-oxoacid dehydrogenase family. Forms a 24-polypeptide structural core with octahedral symmetry. (R)-lipoate serves as cofactor.

It catalyses the reaction N(6)-[(R)-dihydrolipoyl]-L-lysyl-[protein] + acetyl-CoA = N(6)-[(R)-S(8)-acetyldihydrolipoyl]-L-lysyl-[protein] + CoA. In terms of biological role, the pyruvate dehydrogenase complex catalyzes the overall conversion of pyruvate to acetyl-CoA and CO(2). It contains multiple copies of three enzymatic components: pyruvate dehydrogenase (E1), dihydrolipoamide acetyltransferase (E2) and lipoamide dehydrogenase (E3). This Cupriavidus necator (strain ATCC 17699 / DSM 428 / KCTC 22496 / NCIMB 10442 / H16 / Stanier 337) (Ralstonia eutropha) protein is Dihydrolipoyllysine-residue acetyltransferase component of pyruvate dehydrogenase complex (pdhB).